The chain runs to 244 residues: Type III pantothenate kinase (244 aa).

11–18 (DAGNTSIK) contributes to the ATP binding site. Substrate contacts are provided by residues tyrosine 90 and 97 to 100 (GIDR). Aspartate 99 functions as the Proton acceptor in the catalytic mechanism. Aspartate 119 provides a ligand contact to K(+). ATP is bound at residue threonine 122. Threonine 175 contributes to the substrate binding site.

It belongs to the type III pantothenate kinase family. In terms of assembly, homodimer. NH4(+) serves as cofactor. Requires K(+) as cofactor.

Its subcellular location is the cytoplasm. The catalysed reaction is (R)-pantothenate + ATP = (R)-4'-phosphopantothenate + ADP + H(+). The protein operates within cofactor biosynthesis; coenzyme A biosynthesis; CoA from (R)-pantothenate: step 1/5. In terms of biological role, catalyzes the phosphorylation of pantothenate (Pan), the first step in CoA biosynthesis. The protein is Type III pantothenate kinase of Marinomonas sp. (strain MWYL1).